Consider the following 527-residue polypeptide: Laccase-5 (527 aa).

The first 23 residues, 1–23 (MGKYHSFVNVVALSLSLSGRVFG), serve as a signal peptide directing secretion. In terms of domain architecture, Plastocyanin-like 1 spans 25–150 (IGPVTDLTIS…DGLRGPLVVY (126 aa)). N-linked (GlcNAc...) asparagine glycans are attached at residues Asn-74 and Asn-77. Cu cation-binding residues include His-87, His-89, His-132, and His-134. 2 cysteine pairs are disulfide-bonded: Cys-108/Cys-516 and Cys-140/Cys-230. Asn-156, Asn-209, Asn-233, Asn-242, Asn-276, Asn-317, Asn-358, Asn-366, Asn-393, and Asn-402 each carry an N-linked (GlcNAc...) asparagine glycan. A Plastocyanin-like 2 domain is found at 162–306 (VDDDTTVITL…GGVNSAILRY (145 aa)). Positions 373–498 (TVPVLLQILS…AGFAIVWGED (126 aa)) constitute a Plastocyanin-like 3 domain. 7 residues coordinate Cu cation: His-425, His-428, His-430, His-480, Cys-481, His-482, and His-486.

Belongs to the multicopper oxidase family. Homodimer. Cu cation serves as cofactor.

Its subcellular location is the secreted. The enzyme catalyses 4 hydroquinone + O2 = 4 benzosemiquinone + 2 H2O. Functionally, lignin degradation and detoxification of lignin-derived products. This Trametes villosa (White-rot fungus) protein is Laccase-5 (LCC5).